A 585-amino-acid polypeptide reads, in one-letter code: Proline--tRNA ligase (585 aa).

K173 is covalently cross-linked (Isoglutamyl lysine isopeptide (Lys-Gln) (interchain with Q-Cter in protein Pup)).

Belongs to the class-II aminoacyl-tRNA synthetase family. ProS type 1 subfamily. As to quaternary structure, homodimer.

The protein resides in the cytoplasm. The enzyme catalyses tRNA(Pro) + L-proline + ATP = L-prolyl-tRNA(Pro) + AMP + diphosphate. Functionally, catalyzes the attachment of proline to tRNA(Pro) in a two-step reaction: proline is first activated by ATP to form Pro-AMP and then transferred to the acceptor end of tRNA(Pro). As ProRS can inadvertently accommodate and process non-cognate amino acids such as alanine and cysteine, to avoid such errors it has two additional distinct editing activities against alanine. One activity is designated as 'pretransfer' editing and involves the tRNA(Pro)-independent hydrolysis of activated Ala-AMP. The other activity is designated 'posttransfer' editing and involves deacylation of mischarged Ala-tRNA(Pro). The misacylated Cys-tRNA(Pro) is not edited by ProRS. This chain is Proline--tRNA ligase (proS), found in Mycolicibacterium smegmatis (strain ATCC 700084 / mc(2)155) (Mycobacterium smegmatis).